A 794-amino-acid chain; its full sequence is Copper-exporting P-type ATPase (794 aa).

2 consecutive HMA domains span residues 5-70 (KKTT…YGVL) and 72-138 (ETAE…YDAQ). The Cu(+) site is built by Cys-16, Cys-19, Cys-83, and Cys-86. 6 consecutive transmembrane segments (helical) span residues 162–182 (IISA…LFGI), 187–207 (IFMN…IIGW), 224–244 (MDVL…YEMV), 250–270 (ANVM…LILF), 411–431 (YFVP…IAFV), and 438–458 (PALV…LGLA). Asp-495 serves as the catalytic 4-aspartylphosphate intermediate. Mg(2+) is bound by residues Asp-689 and Asp-693. 2 helical membrane passes run 747 to 766 (LFWA…LGLL) and 770 to 789 (IAGA…ALRL).

It belongs to the cation transport ATPase (P-type) (TC 3.A.3) family. Type IB subfamily.

It is found in the cell membrane. It catalyses the reaction Cu(+)(in) + ATP + H2O = Cu(+)(out) + ADP + phosphate + H(+). Its function is as follows. Involved in copper export. The protein is Copper-exporting P-type ATPase (copA) of Staphylococcus saprophyticus subsp. saprophyticus (strain ATCC 15305 / DSM 20229 / NCIMB 8711 / NCTC 7292 / S-41).